A 187-amino-acid chain; its full sequence is Probable GTP-binding protein EngB (187 aa).

An EngB-type G domain is found at 18–187; the sequence is KNSEIAFWGR…KLKENINSNF (170 aa). Residues 26–33, 52–56, 70–73, 137–140, and 168–170 contribute to the GTP site; these read GRSNVGKS, GRTQL, DLPG, TKID, and VSS. S33 and T54 together coordinate Mg(2+).

This sequence belongs to the TRAFAC class TrmE-Era-EngA-EngB-Septin-like GTPase superfamily. EngB GTPase family. The cofactor is Mg(2+).

Functionally, necessary for normal cell division and for the maintenance of normal septation. In Mycoplasmopsis synoviae (strain 53) (Mycoplasma synoviae), this protein is Probable GTP-binding protein EngB.